Here is a 345-residue protein sequence, read N- to C-terminus: 4-hydroxythreonine-4-phosphate dehydrogenase (345 aa).

Substrate is bound by residues His-148 and Thr-149. The a divalent metal cation site is built by His-182, His-227, and His-282. Positions 290, 299, and 308 each coordinate substrate.

Belongs to the PdxA family. Homodimer. Zn(2+) serves as cofactor. It depends on Mg(2+) as a cofactor. Requires Co(2+) as cofactor.

It is found in the cytoplasm. It catalyses the reaction 4-(phosphooxy)-L-threonine + NAD(+) = 3-amino-2-oxopropyl phosphate + CO2 + NADH. It functions in the pathway cofactor biosynthesis; pyridoxine 5'-phosphate biosynthesis; pyridoxine 5'-phosphate from D-erythrose 4-phosphate: step 4/5. In terms of biological role, catalyzes the NAD(P)-dependent oxidation of 4-(phosphooxy)-L-threonine (HTP) into 2-amino-3-oxo-4-(phosphooxy)butyric acid which spontaneously decarboxylates to form 3-amino-2-oxopropyl phosphate (AHAP). This is 4-hydroxythreonine-4-phosphate dehydrogenase from Bradyrhizobium diazoefficiens (strain JCM 10833 / BCRC 13528 / IAM 13628 / NBRC 14792 / USDA 110).